Here is a 96-residue protein sequence, read N- to C-terminus: MRAYEVMVILDPSLEERTVEPSLDKYLNVIRKDGGTVESVDVWGRRRLAYEVKKNAEGIYAVIKLNAEPATVKEFDRQLTLNESIIRTKVMRPDAH.

This sequence belongs to the bacterial ribosomal protein bS6 family.

Binds together with bS18 to 16S ribosomal RNA. This Nocardioides sp. (strain ATCC BAA-499 / JS614) protein is Small ribosomal subunit protein bS6.